The chain runs to 917 residues: Thiamine biosynthesis bifunctional protein ThiEC (917 aa).

The interval 1–243 is thiamine-phosphate synthase; the sequence is MSNEYPYASM…EGWKAVRGDK (243 aa). 4-amino-2-methyl-5-(diphosphooxymethyl)pyrimidine is bound by residues 48 to 52 and Asp84; that span reads QLRAK. Residues Asp85 and Asp109 each coordinate Mg(2+). Ser128 serves as a coordination point for 4-amino-2-methyl-5-(diphosphooxymethyl)pyrimidine. 157–159 contacts 2-[(2R,5Z)-2-carboxy-4-methylthiazol-5(2H)-ylidene]ethyl phosphate; that stretch reads STT. Residue Lys160 participates in 4-amino-2-methyl-5-(diphosphooxymethyl)pyrimidine binding. Residues Gly196 and 216-217 each bind 2-[(2R,5Z)-2-carboxy-4-methylthiazol-5(2H)-ylidene]ethyl phosphate; that span reads VS. Residues 256–311 are disordered; the sequence is PATDTQAAQEGAAKPGSEATEKKFTNAKDAKDAQKLAKQQRVDIAARGSKQRDKAH. Residues 271–917 form a phosphomethylpyrimidine synthase region; the sequence is GSEATEKKFT…GGKLYSTAQE (647 aa). The segment covering 274-290 has biased composition (basic and acidic residues); it reads ATEKKFTNAKDAKDAQK. 5-amino-1-(5-phospho-beta-D-ribosyl)imidazole is bound by residues Asn487, Met516, Tyr545, His581, 601-603, 642-645, and Glu681; these read SRG and DGLR. A Zn(2+)-binding site is contributed by His685. Residue Tyr708 coordinates 5-amino-1-(5-phospho-beta-D-ribosyl)imidazole. His749 lines the Zn(2+) pocket. The [4Fe-4S] cluster site is built by Cys829, Cys832, and Cys837.

It in the N-terminal section; belongs to the thiamine-phosphate synthase family. The protein in the C-terminal section; belongs to the ThiC family. Requires [4Fe-4S] cluster as cofactor.

The catalysed reaction is 2-[(2R,5Z)-2-carboxy-4-methylthiazol-5(2H)-ylidene]ethyl phosphate + 4-amino-2-methyl-5-(diphosphooxymethyl)pyrimidine + 2 H(+) = thiamine phosphate + CO2 + diphosphate. It catalyses the reaction 2-(2-carboxy-4-methylthiazol-5-yl)ethyl phosphate + 4-amino-2-methyl-5-(diphosphooxymethyl)pyrimidine + 2 H(+) = thiamine phosphate + CO2 + diphosphate. The enzyme catalyses 4-methyl-5-(2-phosphooxyethyl)-thiazole + 4-amino-2-methyl-5-(diphosphooxymethyl)pyrimidine + H(+) = thiamine phosphate + diphosphate. It carries out the reaction 5-amino-1-(5-phospho-beta-D-ribosyl)imidazole + S-adenosyl-L-methionine = 4-amino-2-methyl-5-(phosphooxymethyl)pyrimidine + CO + 5'-deoxyadenosine + formate + L-methionine + 3 H(+). It functions in the pathway cofactor biosynthesis; thiamine diphosphate biosynthesis; thiamine phosphate from 4-amino-2-methyl-5-diphosphomethylpyrimidine and 4-methyl-5-(2-phosphoethyl)-thiazole: step 1/1. In terms of biological role, condenses 4-methyl-5-(beta-hydroxyethyl)thiazole monophosphate (THZ-P) and 2-methyl-4-amino-5-hydroxymethyl pyrimidine pyrophosphate (HMP-PP) to form thiamine monophosphate (TMP). Catalyzes the synthesis of the hydroxymethylpyrimidine phosphate (HMP-P) moiety of thiamine from aminoimidazole ribotide (AIR) in a radical S-adenosyl-L-methionine (SAM)-dependent reaction. The sequence is that of Thiamine biosynthesis bifunctional protein ThiEC (thiE/thiC) from Bifidobacterium longum (strain NCC 2705).